Reading from the N-terminus, the 230-residue chain is D-glycero-alpha-D-manno-heptose 1-phosphate guanylyltransferase (230 aa).

Belongs to the D-alpha-D-heptose-1-P guanylyltransferase family.

The enzyme catalyses D-glycero-alpha-D-manno-heptose 1-phosphate + GTP + H(+) = GDP-D-glycero-alpha-D-manno-heptose + diphosphate. The protein operates within nucleotide-sugar biosynthesis; GDP-D-glycero-alpha-D-manno-heptose biosynthesis; GDP-D-glycero-alpha-D-manno-heptose from D-glycero-alpha-D-manno-heptose 7-phosphate: step 3/3. It participates in cell surface structure biogenesis; S-layer biogenesis. Catalyzes the GDP transfer from GTP to D-glycero-alpha-D-manno-heptose 1-phosphate, yielding GDP-D-alpha-D-heptose. Cannot use ATP, CTP, dTTP or UTP as substrate. In Aneurinibacillus thermoaerophilus, this protein is D-glycero-alpha-D-manno-heptose 1-phosphate guanylyltransferase (hddC).